The following is a 349-amino-acid chain: Replication-associated protein (349 aa).

Positions Arg9–Tyr118 constitute a CRESS-DNA virus Rep endonuclease domain. The RCR-1 motif lies at Phe16 to Tyr19. A divalent metal cation is bound by residues Glu51, His59, and His61. The RCR-2 signature appears at His59 to His61. Catalysis depends on Tyr105, which acts as the For DNA cleavage activity. Positions Tyr105–Lys108 match the RCR-3 motif. Asp109 contributes to the a divalent metal cation binding site. The tract at residues Val141 to Gly151 is binding to RBR1. The interval Lys154–Ala174 is oligomerization. Gly220 to Thr227 provides a ligand contact to ATP.

This sequence belongs to the geminiviridae Rep protein family. Homooligomer. Interacts with the replication enhancer protein (REn). Interacts with host retinoblastoma-related protein 1 (RBR1), and may thereby induce the transcription of host replicative enzymes even if the cell is not dividing anymore. Interacts with host PCNA. Interacts with host SCE1 protein. Requires Mg(2+) as cofactor. Mn(2+) serves as cofactor.

The protein localises to the host nucleus. In terms of biological role, essential for the replication of viral ssDNA. The closed circular ssDNA genome is first converted to a superhelical dsDNA. Rep binds a specific region at the genome origin of replication. It introduces an endonucleolytic nick within the conserved sequence 5'-TAATATTAC-3' in the intergenic region of the genome present in all geminiviruses, thereby initiating the rolling circle replication (RCR). Following cleavage, binds covalently to the 5'-phosphate of DNA as a tyrosyl ester. The cleavage gives rise to a free 3'-OH that serves as a primer for the cellular DNA polymerase. The polymerase synthesizes the (+) strand DNA by rolling circle mechanism. After one round of replication, a Rep-catalyzed nucleotidyl transfer reaction releases a circular single-stranded virus genome, thereby terminating the replication. Displays origin-specific DNA cleavage, nucleotidyl transferase, ATPase and helicase activities. The polypeptide is Replication-associated protein (Cabbage leaf curl virus (isolate Jamaica) (CaLCuV)).